We begin with the raw amino-acid sequence, 273 residues long: GATA-type zinc finger protein 1 (273 aa).

Disordered regions lie at residues 99–143 (RDSK…ERVD) and 172–201 (SSRS…AGSE). A GATA-type zinc finger spans residues 208–232 (CASCRTQRTPLWRDAEDGTPLCNAC).

The protein resides in the nucleus. Functionally, transcriptional regulator that plays a key role in germ cell development. Determines the oogenic fate by activating key genes for the oogenic program and meiotic prophase entry. Acts downstream of bone morphogenetic protein (BMP) by regulating expression of genes required for the oogenic programs, which are repressed by Polycomb activities in sexually uncommitted germ cells. Regulates expression of STRA8, a central downstream effector for the meiotic program. Acts independently of retinoic acid (RA). In males, not required for germ-cell sex determination, but required to allow the spermatogonia to efficiently accomplish the meiotic prophase. This is GATA-type zinc finger protein 1 from Homo sapiens (Human).